Reading from the N-terminus, the 159-residue chain is Protein-export protein SecB (159 aa).

Belongs to the SecB family. In terms of assembly, homotetramer, a dimer of dimers. One homotetramer interacts with 1 SecA dimer.

The protein localises to the cytoplasm. Functionally, one of the proteins required for the normal export of preproteins out of the cell cytoplasm. It is a molecular chaperone that binds to a subset of precursor proteins, maintaining them in a translocation-competent state. It also specifically binds to its receptor SecA. The sequence is that of Protein-export protein SecB from Pseudomonas fluorescens (strain SBW25).